The following is a 194-amino-acid chain: GTP cyclohydrolase-2 (194 aa).

50–54 (RIHSE) is a GTP binding site. C55, C66, and C68 together coordinate Zn(2+). Residues 94 to 96 (EGR) and T116 each bind GTP. Residue D128 is the Proton acceptor of the active site. R130 acts as the Nucleophile in catalysis. Residues T151 and K156 each contribute to the GTP site.

Belongs to the GTP cyclohydrolase II family. It depends on Zn(2+) as a cofactor.

The enzyme catalyses GTP + 4 H2O = 2,5-diamino-6-hydroxy-4-(5-phosphoribosylamino)-pyrimidine + formate + 2 phosphate + 3 H(+). Its pathway is cofactor biosynthesis; riboflavin biosynthesis; 5-amino-6-(D-ribitylamino)uracil from GTP: step 1/4. In terms of biological role, catalyzes the conversion of GTP to 2,5-diamino-6-ribosylamino-4(3H)-pyrimidinone 5'-phosphate (DARP), formate and pyrophosphate. This chain is GTP cyclohydrolase-2, found in Helicobacter hepaticus (strain ATCC 51449 / 3B1).